The chain runs to 216 residues: Large ribosomal subunit protein uL3 (216 aa).

An N5-methylglutamine modification is found at Q157.

The protein belongs to the universal ribosomal protein uL3 family. Part of the 50S ribosomal subunit. Forms a cluster with proteins L14 and L19. In terms of processing, methylated by PrmB.

In terms of biological role, one of the primary rRNA binding proteins, it binds directly near the 3'-end of the 23S rRNA, where it nucleates assembly of the 50S subunit. The sequence is that of Large ribosomal subunit protein uL3 from Xanthomonas campestris pv. campestris (strain 8004).